We begin with the raw amino-acid sequence, 604 residues long: Transcriptional repressor rco-1 (604 aa).

Disordered stretches follow at residues 87–110 (RGGA…PAIG) and 124–264 (GGQA…DRLP). Positions 144-163 (MPAPPGLQGPPPPPPPPSQQ) are enriched in pro residues. Composition is skewed to low complexity over residues 164 to 177 (PPFQ…QGPG) and 190 to 209 (PGPA…PATP). Over residues 210 to 229 (QINTPIPYNGGPAQSPQVPT) the composition is skewed to polar residues. WD repeat units lie at residues 295–324 (QHES…QIYD), 342–372 (TGDL…RVWD), 384–414 (GHEQ…RLWD), 425–455 (SIED…RVWD), 469–499 (GHKD…KMWE), 523–553 (GHRD…QFWD), and 565–600 (GHKN…RIWS).

Its function is as follows. Represses transcription by RNA polymerase II. May be involved at several stages of conidiation and other growth and development processes. Appears to regulate genes that are expressed in asexual and sexual spore pathways. In Neurospora crassa (strain ATCC 24698 / 74-OR23-1A / CBS 708.71 / DSM 1257 / FGSC 987), this protein is Transcriptional repressor rco-1 (rco-1).